The following is a 323-amino-acid chain: DGIADASKKFSDATYPIAEKFDWGGSSAVAKYIADASASNPRQAALAVEKLLETGLTMDPKLVRAAVAAHSKALDTAVSNPKLVASKEDFAAVNEALARMIASADKQKFAALRTAFPESRELQSSLFAGNNGYEAEKAYDSFKALTSAVRDASINGANAPVIAEAARSERYVPDGPVGRAAKKFSEATYPIMEKLNWVKSPEISKYLATASSKDPKMMAPGIDKTLEVALTMNQNLINNAVYAHVRAIKGALNTPGFVAERDDFARVNLALAKMIGSADPAKFKALLTAFPGNADLQMALFAANPEQAKAAYETFVALTSAVV.

A run of 2 repeats spans residues 1–173 (DGIA…RYVP) and 174–323 (DGPV…SAVV).

Homotrimer.

The protein localises to the plastid. The protein resides in the chloroplast. Water-soluble antenna for capture of solar energy in the blue-green range. Peridinin is an asymmetric carotenoid. The chain is Peridinin-chlorophyll a-binding protein 3 from Amphidinium carterae (Dinoflagellate).